A 186-amino-acid polypeptide reads, in one-letter code: Early nodulin-like protein 13 (186 aa).

The first 23 residues, 1–23 (MAQRTLVATFFLIFFLLTNLVCS), serve as a signal peptide directing secretion. Positions 24–128 (KEIIVGGKTS…GEKLHIVVMS (105 aa)) constitute a Phytocyanin domain. A disulfide bridge connects residues Cys82 and Cys116. N-linked (GlcNAc...) asparagine glycosylation is found at Asn83 and Asn90. Ala165 is lipidated: GPI-anchor amidated alanine. The propeptide at 166-186 (SSLTRQVGVLGFVGLLAIVLL) is removed in mature form.

It belongs to the early nodulin-like (ENODL) family. As to expression, mostly expressed in seedlings, siliques and flowers, and, to a lower extent, in roots, stems and seeds, but barely in leaves.

The protein resides in the cell membrane. Its function is as follows. May act as a carbohydrate transporter. Required, together with ENODL11, ENODL12, ENODL13, ENODL14 and ENODL15, for male-female communication and pollen tube reception and burst at the synergid cell surface of the female gametophyte. This is Early nodulin-like protein 13 from Arabidopsis thaliana (Mouse-ear cress).